A 327-amino-acid polypeptide reads, in one-letter code: MEAIKGSDVNVPDAVFAWMLDGRGGVKPLENTDVIDEAHPCWLHLNYVHHDSAQWLATTPLLPNNVRDALAGESTRPRVSRFGEGTLITLRCINGSTDERPDQLVAMRVYMDGRLIVSTRQRKVLALDDVVSDLEEGTGPTDCGGWLVDVCDALTDHSSEFIEQLHDKIIDLEDNLLDQQIPPRGFLALLRKQLIVMRRYMAPQRDVYARLASERLPWMSDDQRRRMQDIADRLGRGLDEIDACIARTGVMADEIAQVMQENLARRTYTMSLMAMVFLPSTFLTGLFGVNLGGIPGGGWQFGFSIFCILLVVLIGGVALWLYRSKWL.

The Cytoplasmic portion of the chain corresponds to 1–273 (MEAIKGSDVN…ARRTYTMSLM (273 aa)). Residues 274-294 (AMVFLPSTFLTGLFGVNLGGI) form a helical membrane-spanning segment. Residues 295–300 (PGGGWQ) lie on the Periplasmic side of the membrane. The helical transmembrane segment at 301–321 (FGFSIFCILLVVLIGGVALWL) threads the bilayer. Residues 322 to 327 (YRSKWL) are Cytoplasmic-facing.

It belongs to the CorA metal ion transporter (MIT) (TC 1.A.35) family.

The protein localises to the cell inner membrane. The enzyme catalyses Zn(2+)(out) + H(+)(out) = Zn(2+)(in) + H(+)(in). Its function is as follows. Zinc transporter. Acts as a Zn(2+):proton symporter, which likely mediates zinc ion uptake. The polypeptide is Zinc transport protein ZntB (Shigella flexneri serotype 5b (strain 8401)).